An 829-amino-acid polypeptide reads, in one-letter code: 1,4-alpha-glucan branching enzyme GlgB (829 aa).

The active-site Nucleophile is Asp-405. Glu-458 serves as the catalytic Proton donor. The tract at residues 758–829 (ASKATKVSTK…TTAKKTKDNA (72 aa)) is disordered. Composition is skewed to low complexity over residues 778–789 (VKAATKSSVTKV) and 810–820 (VTKTAKASAKT).

The protein belongs to the glycosyl hydrolase 13 family. GlgB subfamily. In terms of assembly, monomer.

It catalyses the reaction Transfers a segment of a (1-&gt;4)-alpha-D-glucan chain to a primary hydroxy group in a similar glucan chain.. It functions in the pathway glycan biosynthesis; glycogen biosynthesis. Catalyzes the formation of the alpha-1,6-glucosidic linkages in glycogen by scission of a 1,4-alpha-linked oligosaccharide from growing alpha-1,4-glucan chains and the subsequent attachment of the oligosaccharide to the alpha-1,6 position. The sequence is that of 1,4-alpha-glucan branching enzyme GlgB from Actinobacillus succinogenes (strain ATCC 55618 / DSM 22257 / CCUG 43843 / 130Z).